A 118-amino-acid chain; its full sequence is uncharacterized protein (118 aa).

This is an uncharacterized protein from Bacillus subtilis (strain 168).